A 358-amino-acid chain; its full sequence is UPF0283 membrane protein PM0909 (358 aa).

3 consecutive transmembrane segments (helical) span residues 62-82 (LALTALLFCFAVIAQSIQWLV), 90-110 (WIYFVFSLVTCLVVLLGVSSL), and 213-233 (ALEAAVIVAVSPLAVIDMFFL).

This sequence belongs to the UPF0283 family.

The protein localises to the cell inner membrane. This is UPF0283 membrane protein PM0909 from Pasteurella multocida (strain Pm70).